The sequence spans 308 residues: Polyprenyl-phosphate transporter (308 aa).

8 consecutive transmembrane segments (helical) span residues 15–35 (GLAM…IAFI), 69–89 (INGL…ATLA), 91–111 (LISW…FGLI), 130–150 (LLWL…KPLH), 163–183 (AIAI…LLLI), 200–220 (ILLI…HILS), 228–248 (DVTL…IWPW), and 282–302 (PSQW…VLGL).

This sequence belongs to the PopT family.

Its subcellular location is the cell inner membrane. With respect to regulation, active in alkaline conditions. Functionally, flippase that catalyzes the transport of undecaprenyl phosphate (UndP) across the cytoplasmic membrane, from the external side to the cytoplasmic side. Is involved in UndP recycling during peptidoglycan synthesis. Required for cell shape maintenance at alkaline pH and peptidoglycan maintenance. Required by the cholera pathogen for growth and cell shape maintenance in the intestine. The protein is Polyprenyl-phosphate transporter of Vibrio cholerae serotype O1 (strain ATCC 39315 / El Tor Inaba N16961).